The primary structure comprises 65 residues: uncharacterized protein (65 aa).

The next 2 helical transmembrane spans lie at 12 to 31 (IVKWLIFTILLVASISLIVV) and 41 to 63 (LVARATPLAIVVGLSAIAAAIIV).

The protein resides in the cell membrane. This is an uncharacterized protein from Halalkalibacterium halodurans (strain ATCC BAA-125 / DSM 18197 / FERM 7344 / JCM 9153 / C-125) (Bacillus halodurans).